The chain runs to 375 residues: Succinyl-diaminopimelate desuccinylase (375 aa).

His-66 is a Zn(2+) binding site. Asp-68 is a catalytic residue. A Zn(2+)-binding site is contributed by Asp-99. The active-site Proton acceptor is the Glu-133. Glu-134, Glu-162, and His-348 together coordinate Zn(2+).

Belongs to the peptidase M20A family. DapE subfamily. As to quaternary structure, homodimer. It depends on Zn(2+) as a cofactor. Co(2+) is required as a cofactor.

It carries out the reaction N-succinyl-(2S,6S)-2,6-diaminopimelate + H2O = (2S,6S)-2,6-diaminopimelate + succinate. The protein operates within amino-acid biosynthesis; L-lysine biosynthesis via DAP pathway; LL-2,6-diaminopimelate from (S)-tetrahydrodipicolinate (succinylase route): step 3/3. Functionally, catalyzes the hydrolysis of N-succinyl-L,L-diaminopimelic acid (SDAP), forming succinate and LL-2,6-diaminopimelate (DAP), an intermediate involved in the bacterial biosynthesis of lysine and meso-diaminopimelic acid, an essential component of bacterial cell walls. The chain is Succinyl-diaminopimelate desuccinylase from Escherichia coli O17:K52:H18 (strain UMN026 / ExPEC).